The chain runs to 211 residues: Endonuclease YncB (211 aa).

The first 19 residues, 1-19, serve as a signal peptide directing secretion; sequence MKKILISMIAIVLSITLAA. Cys20 carries N-palmitoyl cysteine lipidation. Cys20 carries S-diacylglycerol cysteine lipidation. Residues 24 to 63 form a disordered region; it reads HAAKNHSDSNGTEQVSQDTHSNEYNQTEQKAGTPHSKNQK. A compositionally biased stretch (polar residues) spans 31 to 53; the sequence is DSNGTEQVSQDTHSNEYNQTEQK. The TNase-like domain occupies 64–197; that stretch reads KLVNVTLDRA…KSDKLSIWSK (134 aa). Residue Asp77 coordinates Ca(2+). Arg91 is a catalytic residue. Residues Asp96 and Thr97 each coordinate Ca(2+). Active-site residues include Glu99 and Arg142.

It belongs to the thermonuclease family. It depends on Ca(2+) as a cofactor.

Its subcellular location is the cell membrane. Inhibited by aurintricalboxylic acid but not by Zn(2+). Its function is as follows. Shows DNase activity on double strand DNA. In Bacillus subtilis (strain 168), this protein is Endonuclease YncB (yncB).